A 251-amino-acid polypeptide reads, in one-letter code: Phosphate import ATP-binding protein PstB (251 aa).

Residues 5–246 (IKIRGVNFFY…PKDKRTEDYI (242 aa)) enclose the ABC transporter domain. 37–44 (GPSGCGKS) lines the ATP pocket.

The protein belongs to the ABC transporter superfamily. Phosphate importer (TC 3.A.1.7) family. In terms of assembly, the complex is composed of two ATP-binding proteins (PstB), two transmembrane proteins (PstC and PstA) and a solute-binding protein (PstS).

It localises to the cell membrane. The catalysed reaction is phosphate(out) + ATP + H2O = ADP + 2 phosphate(in) + H(+). Part of the ABC transporter complex PstSACB involved in phosphate import. Responsible for energy coupling to the transport system. The polypeptide is Phosphate import ATP-binding protein PstB (Dehalococcoides mccartyi (strain ATCC BAA-2266 / KCTC 15142 / 195) (Dehalococcoides ethenogenes (strain 195))).